A 1001-amino-acid polypeptide reads, in one-letter code: Serine/threonine-protein kinase TAO1-B (1001 aa).

One can recognise a Protein kinase domain in the interval 28 to 281 (FSDLREIGHG…SDELLKHMFV (254 aa)). ATP is bound by residues 34 to 42 (IGHGSFGAV) and Lys57. Asp151 serves as the catalytic Proton acceptor. Disordered regions lie at residues 324–435 (PAVE…YRNR) and 567–586 (KEEL…EWLS). Low complexity predominate over residues 350–370 (SNQSIPSMSISASSQSSSVNS). Basic and acidic residues-rich tracts occupy residues 375-388 (SDDK…EGDH) and 577-586 (PKKEKQEWLS). Coiled-coil stretches lie at residues 458-651 (SELR…EHAM) and 754-877 (KAVL…EIEA). The segment at 911 to 1001 (SHNPTGGPGP…ISNGSHMSYT (91 aa)) is disordered. Positions 921-930 (HWGHPMAGPP) are enriched in low complexity. Composition is skewed to polar residues over residues 949-967 (GSVQ…NSPQ) and 975-1001 (GGRT…MSYT).

This sequence belongs to the protein kinase superfamily. STE Ser/Thr protein kinase family. STE20 subfamily.

The protein localises to the cytoplasm. The enzyme catalyses L-seryl-[protein] + ATP = O-phospho-L-seryl-[protein] + ADP + H(+). It carries out the reaction L-threonyl-[protein] + ATP = O-phospho-L-threonyl-[protein] + ADP + H(+). In terms of biological role, serine/threonine-protein kinase involved in various processes such as p38/mapk14 stress-activated MAPK cascade, DNA damage response and regulation of cytoskeleton stability. Acts as an activator of the p38/MAPK14 stress-activated MAPK cascade by mediating phosphorylation and subsequent activation of upstream MAP kinase kinases. In response to DNA damage, involved in the G2/M transition DNA damage checkpoint by activating the p38/MAPK14 stress-activated MAPK cascade. This chain is Serine/threonine-protein kinase TAO1-B (taok1-b), found in Xenopus laevis (African clawed frog).